A 144-amino-acid polypeptide reads, in one-letter code: uncharacterized protein (144 aa).

This is an uncharacterized protein from Bacillus subtilis (strain 168).